Here is a 451-residue protein sequence, read N- to C-terminus: Glycine--tRNA ligase (451 aa).

2 residues coordinate substrate: Arg-99 and Glu-168. ATP is bound by residues 200-202, 210-215, 284-285, and 328-331; these read RNE, FRTREF, EL, and GLDR. 215–219 serves as a coordination point for substrate; sequence FEQME. Residue 324 to 328 participates in substrate binding; that stretch reads EPSVG.

This sequence belongs to the class-II aminoacyl-tRNA synthetase family. In terms of assembly, homodimer.

Its subcellular location is the cytoplasm. It catalyses the reaction tRNA(Gly) + glycine + ATP = glycyl-tRNA(Gly) + AMP + diphosphate. Functionally, catalyzes the attachment of glycine to tRNA(Gly). The polypeptide is Glycine--tRNA ligase (Mycoplasmopsis synoviae (strain 53) (Mycoplasma synoviae)).